Consider the following 418-residue polypeptide: Serine hydroxymethyltransferase (418 aa).

Residues L120 and 124–126 (GHL) each bind (6S)-5,6,7,8-tetrahydrofolate. K229 carries the N6-(pyridoxal phosphate)lysine modification. 353–355 (SPF) contributes to the (6S)-5,6,7,8-tetrahydrofolate binding site.

Belongs to the SHMT family. In terms of assembly, homodimer. Pyridoxal 5'-phosphate is required as a cofactor.

It is found in the cytoplasm. It catalyses the reaction (6R)-5,10-methylene-5,6,7,8-tetrahydrofolate + glycine + H2O = (6S)-5,6,7,8-tetrahydrofolate + L-serine. The protein operates within one-carbon metabolism; tetrahydrofolate interconversion. It participates in amino-acid biosynthesis; glycine biosynthesis; glycine from L-serine: step 1/1. Functionally, catalyzes the reversible interconversion of serine and glycine with tetrahydrofolate (THF) serving as the one-carbon carrier. This reaction serves as the major source of one-carbon groups required for the biosynthesis of purines, thymidylate, methionine, and other important biomolecules. Also exhibits THF-independent aldolase activity toward beta-hydroxyamino acids, producing glycine and aldehydes, via a retro-aldol mechanism. This Psychrobacter sp. (strain PRwf-1) protein is Serine hydroxymethyltransferase.